The chain runs to 178 residues: Actin-related protein 2/3 complex subunit 3 (178 aa).

Residue Lys29 forms a Glycyl lysine isopeptide (Lys-Gly) (interchain with G-Cter in ubiquitin) linkage.

It belongs to the ARPC3 family. In terms of assembly, component of the Arp2/3 complex composed of ARP2, ARP3, ARC40/p41-ARC, ARC35/p34-ARC, ARC18/p21-ARC, ARC19/p20-ARC and ARC16/p16-ARC.

The protein localises to the cytoplasm. It is found in the cytoskeleton. Functions as a component of the Arp2/3 complex which is involved in regulation of actin polymerization and together with an activating nucleation-promoting factor (NPF) mediates the formation of branched actin networks. This Saccharomyces cerevisiae (strain ATCC 204508 / S288c) (Baker's yeast) protein is Actin-related protein 2/3 complex subunit 3 (ARC18).